Consider the following 119-residue polypeptide: Protein phosphatase EYA1 (119 aa).

This sequence belongs to the HAD-like hydrolase superfamily. EYA family. Mg(2+) is required as a cofactor.

It localises to the cytoplasm. Its subcellular location is the nucleus. The enzyme catalyses O-phospho-L-tyrosyl-[protein] + H2O = L-tyrosyl-[protein] + phosphate. It carries out the reaction O-phospho-L-seryl-[protein] + H2O = L-seryl-[protein] + phosphate. It catalyses the reaction O-phospho-L-threonyl-[protein] + H2O = L-threonyl-[protein] + phosphate. Its function is as follows. Functions both as protein phosphatase and as transcriptional coactivator for SIX1, and probably also for other transcription factors of this family. Tyrosine phosphatase that dephosphorylates 'Tyr-142' of histone H2AX (H2AXY142ph) and promotes efficient DNA repair via the recruitment of DNA repair complexes containing MDC1. 'Tyr-142' phosphorylation of histone H2AX plays a central role in DNA repair and acts as a mark that distinguishes between apoptotic and repair responses to genotoxic stress. Its function as histone phosphatase may contribute to its function in transcription regulation during organogenesis. Also has phosphatase activity with proteins phosphorylated on Ser and Thr residues (in vitro). Required for normal embryonic development of the skeleton, kidneys and ears. The polypeptide is Protein phosphatase EYA1 (EYA1) (Gallus gallus (Chicken)).